Reading from the N-terminus, the 173-residue chain is Ribosome maturation factor RimM (173 aa).

One can recognise a PRC barrel domain in the interval 95-169 (PDEFYDHELE…TIVIDPPEGL (75 aa)).

This sequence belongs to the RimM family. In terms of assembly, binds ribosomal protein uS19.

It localises to the cytoplasm. An accessory protein needed during the final step in the assembly of 30S ribosomal subunit, possibly for assembly of the head region. Essential for efficient processing of 16S rRNA. May be needed both before and after RbfA during the maturation of 16S rRNA. It has affinity for free ribosomal 30S subunits but not for 70S ribosomes. The sequence is that of Ribosome maturation factor RimM from Mycolicibacterium smegmatis (strain ATCC 700084 / mc(2)155) (Mycobacterium smegmatis).